A 376-amino-acid polypeptide reads, in one-letter code: Queuine tRNA-ribosyltransferase (376 aa).

Catalysis depends on Asp93, which acts as the Proton acceptor. Substrate contacts are provided by residues Asp93–Phe97, Asp147, Gln190, and Gly217. The tract at residues Gly248–Asp254 is RNA binding. The active-site Nucleophile is the Asp267. The RNA binding; important for wobble base 34 recognition stretch occupies residues Thr272–Arg276.

The protein belongs to the queuine tRNA-ribosyltransferase family. As to quaternary structure, homodimer. Within each dimer, one monomer is responsible for RNA recognition and catalysis, while the other monomer binds to the replacement base PreQ1.

It carries out the reaction 7-aminomethyl-7-carbaguanine + guanosine(34) in tRNA = 7-aminomethyl-7-carbaguanosine(34) in tRNA + guanine. It participates in tRNA modification; tRNA-queuosine biosynthesis. In terms of biological role, catalyzes the base-exchange of a guanine (G) residue with the queuine precursor 7-aminomethyl-7-deazaguanine (PreQ1) at position 34 (anticodon wobble position) in tRNAs with GU(N) anticodons (tRNA-Asp, -Asn, -His and -Tyr). Catalysis occurs through a double-displacement mechanism. The nucleophile active site attacks the C1' of nucleotide 34 to detach the guanine base from the RNA, forming a covalent enzyme-RNA intermediate. The proton acceptor active site deprotonates the incoming PreQ1, allowing a nucleophilic attack on the C1' of the ribose to form the product. After dissociation, two additional enzymatic reactions on the tRNA convert PreQ1 to queuine (Q), resulting in the hypermodified nucleoside queuosine (7-(((4,5-cis-dihydroxy-2-cyclopenten-1-yl)amino)methyl)-7-deazaguanosine). This Rhizobium meliloti (strain 1021) (Ensifer meliloti) protein is Queuine tRNA-ribosyltransferase.